We begin with the raw amino-acid sequence, 184 residues long: GTP cyclohydrolase 1 (184 aa).

Zn(2+)-binding residues include C75, H78, and C146.

The protein belongs to the GTP cyclohydrolase I family. Homomer.

The catalysed reaction is GTP + H2O = 7,8-dihydroneopterin 3'-triphosphate + formate + H(+). The protein operates within cofactor biosynthesis; 7,8-dihydroneopterin triphosphate biosynthesis; 7,8-dihydroneopterin triphosphate from GTP: step 1/1. The protein is GTP cyclohydrolase 1 of Coxiella burnetii (strain Dugway 5J108-111).